A 444-amino-acid chain; its full sequence is C4-dicarboxylate transport protein 2 (444 aa).

6 helical membrane-spanning segments follow: residues 23 to 43 (ILYV…WLWP), 61 to 81 (LIKM…IAHI), 95 to 115 (LVYF…VANV), 162 to 182 (GEIL…MGLG), 198 to 218 (AMFG…FGAM), and 236 to 256 (LIAT…GIIA).

It belongs to the dicarboxylate/amino acid:cation symporter (DAACS) (TC 2.A.23) family.

It is found in the cell inner membrane. Responsible for the transport of dicarboxylates such as succinate, fumarate, and malate from the periplasm across the membrane. This is C4-dicarboxylate transport protein 2 from Bradyrhizobium diazoefficiens (strain JCM 10833 / BCRC 13528 / IAM 13628 / NBRC 14792 / USDA 110).